Consider the following 143-residue polypeptide: D-aminoacyl-tRNA deacylase (143 aa).

The short motif at 135-136 (GP) is the Gly-cisPro motif, important for rejection of L-amino acids element.

It belongs to the DTD family. In terms of assembly, homodimer.

The protein localises to the cytoplasm. The catalysed reaction is glycyl-tRNA(Ala) + H2O = tRNA(Ala) + glycine + H(+). The enzyme catalyses a D-aminoacyl-tRNA + H2O = a tRNA + a D-alpha-amino acid + H(+). In terms of biological role, an aminoacyl-tRNA editing enzyme that deacylates mischarged D-aminoacyl-tRNAs. Also deacylates mischarged glycyl-tRNA(Ala), protecting cells against glycine mischarging by AlaRS. Acts via tRNA-based rather than protein-based catalysis; rejects L-amino acids rather than detecting D-amino acids in the active site. By recycling D-aminoacyl-tRNA to D-amino acids and free tRNA molecules, this enzyme counteracts the toxicity associated with the formation of D-aminoacyl-tRNA entities in vivo and helps enforce protein L-homochirality. This is D-aminoacyl-tRNA deacylase from Mycobacterium bovis (strain ATCC BAA-935 / AF2122/97).